A 1373-amino-acid chain; its full sequence is Disease resistance protein RRS1 (1373 aa).

Positions 5–146 (EKDEEFVCIS…EIVRDVYETH (142 aa)) constitute a TIR domain. Residues 170-421 (IGIRCVGIWG…LLEGCGFFPH (252 aa)) form the NB-ARC domain. 179–186 (GMPGIGKT) is an ATP binding site. LRR repeat units follow at residues 498-522 (SEEI…AFKN), 535-553 (NPEV…HSLP), 554-575 (NELR…NFDP), 577-598 (HLVE…TKNL), 621-646 (AENL…RLLR), 665-688 (PPNI…TVKP), 742-766 (LPNM…SIQG), 768-793 (PRFL…SLEI), and 831-854 (PRNL…PLSL). The Nuclear localization signal motif lies at 988-1005 (RNFHCWAPGKVVPKVRKD). Residues 1204 to 1272 (IPAIDEGDLW…YLSEHNHPRP (69 aa)) constitute a DNA-binding region (WRKY). Positions 1300 to 1323 (RVFQNKDEPNKPHLPSSSTPPGNA) are disordered.

In terms of assembly, interacts with PopP2, a R.solanacearum type III effector.

It localises to the nucleus. Transcription factor. Interacts specifically with the W box (5'-(T)TGAC[CT]-3'), a frequently occurring elicitor-responsive cis-acting element. Also acts as a disease resistance protein involved in resistance to fungal and bacterial pathogens, including R.solanacearum, P.syringae pv. tomato and C.higginsianum. In presence of RPS4, elicites an EDS1-dependent hypersensitive response. This chain is Disease resistance protein RRS1, found in Arabidopsis thaliana (Mouse-ear cress).